Consider the following 91-residue polypeptide: Acylphosphatase (91 aa).

The 86-residue stretch at 6-91 folds into the Acylphosphatase-like domain; sequence CMRCYISGRV…WEDYITFDVL (86 aa). Active-site residues include Arg21 and Asn39.

It belongs to the acylphosphatase family.

The catalysed reaction is an acyl phosphate + H2O = a carboxylate + phosphate + H(+). The chain is Acylphosphatase (acyP) from Legionella pneumophila (strain Lens).